Consider the following 118-residue polypeptide: Putative membrane protein insertion efficiency factor (118 aa).

The protein belongs to the UPF0161 family.

The protein resides in the cell inner membrane. Its function is as follows. Could be involved in insertion of integral membrane proteins into the membrane. The polypeptide is Putative membrane protein insertion efficiency factor (Helicobacter pylori (strain HPAG1)).